The primary structure comprises 399 residues: Phosphoglycerate kinase (399 aa).

Substrate contacts are provided by residues Asp24–Asn26, Arg41, His64–Arg67, Arg123, and Arg160. ATP contacts are provided by residues Lys210, Gly298, Glu329, and Gly355–Ser358.

The protein belongs to the phosphoglycerate kinase family. In terms of assembly, monomer.

The protein resides in the cytoplasm. It carries out the reaction (2R)-3-phosphoglycerate + ATP = (2R)-3-phospho-glyceroyl phosphate + ADP. Its pathway is carbohydrate degradation; glycolysis; pyruvate from D-glyceraldehyde 3-phosphate: step 2/5. The protein is Phosphoglycerate kinase of Salinispora arenicola (strain CNS-205).